We begin with the raw amino-acid sequence, 308 residues long: 4-hydroxy-3-methylbut-2-enyl diphosphate reductase (308 aa).

Position 13 (C13) interacts with [4Fe-4S] cluster. Residues H42 and H75 each contribute to the (2E)-4-hydroxy-3-methylbut-2-enyl diphosphate site. H42 and H75 together coordinate dimethylallyl diphosphate. H42 and H75 together coordinate isopentenyl diphosphate. C97 contributes to the [4Fe-4S] cluster binding site. Position 125 (H125) interacts with (2E)-4-hydroxy-3-methylbut-2-enyl diphosphate. H125 is a dimethylallyl diphosphate binding site. Residue H125 participates in isopentenyl diphosphate binding. The active-site Proton donor is the E127. Residue T165 participates in (2E)-4-hydroxy-3-methylbut-2-enyl diphosphate binding. C195 lines the [4Fe-4S] cluster pocket. 4 residues coordinate (2E)-4-hydroxy-3-methylbut-2-enyl diphosphate: S223, S224, N225, and S267. The dimethylallyl diphosphate site is built by S223, S224, N225, and S267. Residues S223, S224, N225, and S267 each coordinate isopentenyl diphosphate.

This sequence belongs to the IspH family. Requires [4Fe-4S] cluster as cofactor.

It catalyses the reaction isopentenyl diphosphate + 2 oxidized [2Fe-2S]-[ferredoxin] + H2O = (2E)-4-hydroxy-3-methylbut-2-enyl diphosphate + 2 reduced [2Fe-2S]-[ferredoxin] + 2 H(+). The enzyme catalyses dimethylallyl diphosphate + 2 oxidized [2Fe-2S]-[ferredoxin] + H2O = (2E)-4-hydroxy-3-methylbut-2-enyl diphosphate + 2 reduced [2Fe-2S]-[ferredoxin] + 2 H(+). It participates in isoprenoid biosynthesis; dimethylallyl diphosphate biosynthesis; dimethylallyl diphosphate from (2E)-4-hydroxy-3-methylbutenyl diphosphate: step 1/1. The protein operates within isoprenoid biosynthesis; isopentenyl diphosphate biosynthesis via DXP pathway; isopentenyl diphosphate from 1-deoxy-D-xylulose 5-phosphate: step 6/6. Functionally, catalyzes the conversion of 1-hydroxy-2-methyl-2-(E)-butenyl 4-diphosphate (HMBPP) into a mixture of isopentenyl diphosphate (IPP) and dimethylallyl diphosphate (DMAPP). Acts in the terminal step of the DOXP/MEP pathway for isoprenoid precursor biosynthesis. This chain is 4-hydroxy-3-methylbut-2-enyl diphosphate reductase, found in Chlamydia muridarum (strain MoPn / Nigg).